The chain runs to 1607 residues: Thrombospondin type-1 domain-containing protein 7B (1607 aa).

Residues 1–31 (MFLRSDLAVTHWVSRSMRKLFLVLSLLLSQA) form the signal peptide. At 32–1556 (AHLEGRKDNQ…QPLDPDGRVK (1525 aa)) the chain is on the extracellular side. TSP type-1 domains are found at residues 40 to 98 (NQFL…RVCD), 102 to 177 (DLFQ…IPCP), 179 to 233 (DCVV…VSCP), 336 to 392 (DCET…IAEG), 399 to 482 (PRYS…VPCS), 484 to 543 (DCIV…PMCH), 601 to 661 (DCVV…HSCT), 662 to 735 (QLYW…LPCK), 737 to 796 (DCLV…SLCP), 797 to 869 (SYRW…IPCR), 871 to 924 (DCTF…CPCD), 925 to 999 (TFMS…IPCP), 1001 to 1126 (DCKL…LLCP), 1128 to 1182 (ECVM…ENCF), 1183 to 1246 (QFQY…VECV), 1248 to 1303 (NCQL…TPCY), 1304 to 1369 (SWVL…VPCP), and 1371 to 1432 (DCHI…GKCY). N-linked (GlcNAc...) asparagine glycans are attached at residues Asn-150 and Asn-219. Intrachain disulfides connect Cys-411/Cys-477, Cys-431/Cys-481, and Cys-442/Cys-466. 3 cysteine pairs are disulfide-bonded: Cys-602-Cys-643, Cys-613-Cys-617, and Cys-655-Cys-660. A glycan (N-linked (GlcNAc...) asparagine) is linked at Asn-683. Disulfide bonds link Cys-738/Cys-779, Cys-749/Cys-753, and Cys-789/Cys-795. N-linked (GlcNAc...) asparagine glycosylation is present at Asn-757. Asn-842 carries an N-linked (GlcNAc...) asparagine glycan. Asn-933 carries an N-linked (GlcNAc...) asparagine glycan. 5 cysteine pairs are disulfide-bonded: Cys-937-Cys-994, Cys-960-Cys-998, Cys-971-Cys-984, Cys-1002-Cys-1039, and Cys-1013-Cys-1017. A glycan (N-linked (GlcNAc...) asparagine) is linked at Asn-985. Asn-1105 carries N-linked (GlcNAc...) asparagine glycosylation. Cys-1121 and Cys-1125 are disulfide-bonded. N-linked (GlcNAc...) asparagine glycans are attached at residues Asn-1187 and Asn-1199. Cystine bridges form between Cys-1249–Cys-1287, Cys-1260–Cys-1264, and Cys-1297–Cys-1302. 2 N-linked (GlcNAc...) asparagine glycosylation sites follow: Asn-1309 and Asn-1335. 3 cysteine pairs are disulfide-bonded: Cys-1372–Cys-1416, Cys-1383–Cys-1387, and Cys-1426–Cys-1431. N-linked (GlcNAc...) asparagine glycosylation is found at Asn-1457 and Asn-1525. The helical transmembrane segment at 1557–1577 (MWVYGVSGGSFLIMIFLVFTS) threads the bilayer. Topologically, residues 1578-1607 (YLVCKKPKPHQSTPRHQKPLTLAYDGDLDM) are cytoplasmic.

It is found in the membrane. The sequence is that of Thrombospondin type-1 domain-containing protein 7B from Mus musculus (Mouse).